The sequence spans 233 residues: Histone H1-I (233 aa).

Disordered stretches follow at residues 1-55 and 115-233; these read MSDS…HPPV and TGAS…KKSK. Over residues 17-29 the composition is skewed to low complexity; that stretch reads KAATPAKSPAKSP. Positions 51-125 constitute an H15 domain; sequence THPPVSEMVV…GASGSFKMPP (75 aa). Composition is skewed to basic and acidic residues over residues 128–137 and 144–155; these read KKVDKPEAAP and PKREIEKKEKKV. 3 stretches are compositionally biased toward basic residues: residues 172–186, 199–213, and 223–233; these read AAKK…KKAA, SPKK…KPTP, and AAAKKPAKKSK.

This sequence belongs to the histone H1/H5 family.

Its subcellular location is the nucleus. The protein resides in the chromosome. Functionally, histones H1 are necessary for the condensation of nucleosome chains into higher-order structures. This is Histone H1-I from Glyptotendipes salinus (Midge).